Here is a 1370-residue protein sequence, read N- to C-terminus: DNA-directed RNA polymerase subunit beta (1370 aa).

This sequence belongs to the RNA polymerase beta chain family. The RNAP catalytic core consists of 2 alpha, 1 beta, 1 beta' and 1 omega subunit. When a sigma factor is associated with the core the holoenzyme is formed, which can initiate transcription.

It catalyses the reaction RNA(n) + a ribonucleoside 5'-triphosphate = RNA(n+1) + diphosphate. Its function is as follows. DNA-dependent RNA polymerase catalyzes the transcription of DNA into RNA using the four ribonucleoside triphosphates as substrates. The sequence is that of DNA-directed RNA polymerase subunit beta from Polaromonas naphthalenivorans (strain CJ2).